A 503-amino-acid chain; its full sequence is Maturase K (503 aa).

Belongs to the intron maturase 2 family. MatK subfamily.

It localises to the plastid. The protein localises to the chloroplast. Usually encoded in the trnK tRNA gene intron. Probably assists in splicing its own and other chloroplast group II introns. The polypeptide is Maturase K (Rosa acicularis (Prickly rose)).